Consider the following 304-residue polypeptide: MSHLLTMSELSEVEISEILKDAEDFANGKESKTTEQTFVANLFFENSTRTRFSFEVAEKRLGLDVLNFSADASSVQKGETLYDTIRTLESIGTKAVVIRHEQDRYFDELKDQVNIPILNAGDGCGNHPTQCLLDLLTIKQEFGRFEGLKIAIVGDVRHSRVARSNAEALTKLGATIYFASPEEWKDEDNTFGTYKPLDELVPEVDVMMLLRVQHERHDHYETDIMKEYHEKHGLTVEREKRMKEGSIIMHPAPVNRDVEIASELVECERSRIFKQMENGVYVRMAVLKRALPNVLGGMKHELFV.

Arg-49 and Thr-50 together coordinate carbamoyl phosphate. Lys-77 is an L-aspartate binding site. Residues Arg-99, His-127, and Gln-130 each contribute to the carbamoyl phosphate site. Positions 160 and 211 each coordinate L-aspartate. Positions 252 and 253 each coordinate carbamoyl phosphate.

This sequence belongs to the aspartate/ornithine carbamoyltransferase superfamily. ATCase family. Heterododecamer (2C3:3R2) of six catalytic PyrB chains organized as two trimers (C3), and six regulatory PyrI chains organized as three dimers (R2).

The catalysed reaction is carbamoyl phosphate + L-aspartate = N-carbamoyl-L-aspartate + phosphate + H(+). It functions in the pathway pyrimidine metabolism; UMP biosynthesis via de novo pathway; (S)-dihydroorotate from bicarbonate: step 2/3. Functionally, catalyzes the condensation of carbamoyl phosphate and aspartate to form carbamoyl aspartate and inorganic phosphate, the committed step in the de novo pyrimidine nucleotide biosynthesis pathway. This is Aspartate carbamoyltransferase catalytic subunit from Bacillus cereus (strain ZK / E33L).